The chain runs to 472 residues: UDP-N-acetylmuramate--L-alanine ligase (472 aa).

121-127 (GTHGKTT) contributes to the ATP binding site.

The protein belongs to the MurCDEF family.

Its subcellular location is the cytoplasm. The catalysed reaction is UDP-N-acetyl-alpha-D-muramate + L-alanine + ATP = UDP-N-acetyl-alpha-D-muramoyl-L-alanine + ADP + phosphate + H(+). It participates in cell wall biogenesis; peptidoglycan biosynthesis. Its function is as follows. Cell wall formation. The chain is UDP-N-acetylmuramate--L-alanine ligase from Hahella chejuensis (strain KCTC 2396).